Consider the following 28-residue polypeptide: NU-theraphotoxin-Preg1a (28 aa).

Intrachain disulfides connect C2–C19, C9–C22, and C18–C27.

In terms of tissue distribution, expressed by the venom gland.

It localises to the secreted. In terms of biological role, toxin that acts as an agonist on melanocortin receptors (MC1R, MC3R, MC5R, MC5R). After binding to MC1R, the peptide activates the hMC1R/Gs pathway, but after binding to MC4R, it is not able to activate or antagonize the MC4R/Gs pathway. Inhibits melanocyte stimulating hormone (MSH)-binding to human receptors (Ki=1.8 uM to MC1R, Ki=19.8 uM to MC3R, Ki=7.1 uM to MC4R, Ki=10.0 uM to MC5R). This toxin is structurally unrelated to the natural agonists. The protein is NU-theraphotoxin-Preg1a of Poecilotheria regalis (Indian ornamental tree spider).